A 111-amino-acid chain; its full sequence is Cyclin-dependent protein kinase inhibitor SMR2 (111 aa).

Positions 1–66 (MSKLLETLEE…PPPRKRPREI (66 aa)) are disordered. Residues 10–35 (EEKTVEQKPRSQEEEDHQDSSKKEEL) are compositionally biased toward basic and acidic residues.

As to quaternary structure, interacts with CYCD2-1. Interacts with CDKB1-1. Expressed at low levels in roots and stems. Expressed in the root vascular tissue.

The protein resides in the nucleus. In terms of biological role, cyclin-dependent protein kinase (CDK) inhibitor that restricts cell proliferation and cooperates with SIM and SMR1 to promote endoreplication during leaf development. The chain is Cyclin-dependent protein kinase inhibitor SMR2 from Arabidopsis thaliana (Mouse-ear cress).